A 501-amino-acid polypeptide reads, in one-letter code: MEFSVKSGSPEKQRSACIVVGVFEPRRLSGTAEQLDEISEGYISNLLRKGDLEGKSGQMLLLHHVPNILSERVLLVGCGKERELDERQYRQIITKTINTLNETGSMEAVCFLSELHVKGRDIYWKVRQAVEAAQDGLYSFDSLKTRKAEARRPLRKVVFNVPTRRELPIGERAVSHALAIAEGITTCKNVANMPPNICNPAYLAEQAKILENDYDKVTTTIVDEKEMEELGMGSYLAVGRGSVNESLMSIIKYDGAGDDSKPLVLVGKGLTFDSGGISLKPGAGMDEMKYDMGGAAGVLGAMHALVELNLPINVIGVLAGCENMPSSNAYRPGDILTTMSGQTVEVLNTDAEGRLVLCDALTYVERFNPEAVIDVATLTGACVVALGAHATGLLSSHNPLAHELLNASEQSGDRAWRMPLWDDYQDQLESPFADFTNLGGKEAGTITAACFLSRFTKKYNWAHLDIAGTAWRSGKNKGATGRPVSMLTQFLLNRSGQEQGE.

2 residues coordinate Mn(2+): Lys-268 and Asp-273. The active site involves Lys-280. Residues Asp-291, Asp-350, and Glu-352 each coordinate Mn(2+). Arg-354 is a catalytic residue.

The protein belongs to the peptidase M17 family. Requires Mn(2+) as cofactor.

The protein resides in the cytoplasm. The enzyme catalyses Release of an N-terminal amino acid, Xaa-|-Yaa-, in which Xaa is preferably Leu, but may be other amino acids including Pro although not Arg or Lys, and Yaa may be Pro. Amino acid amides and methyl esters are also readily hydrolyzed, but rates on arylamides are exceedingly low.. It carries out the reaction Release of an N-terminal amino acid, preferentially leucine, but not glutamic or aspartic acids.. Its function is as follows. Presumably involved in the processing and regular turnover of intracellular proteins. Catalyzes the removal of unsubstituted N-terminal amino acids from various peptides. The protein is Probable cytosol aminopeptidase of Colwellia psychrerythraea (strain 34H / ATCC BAA-681) (Vibrio psychroerythus).